A 284-amino-acid chain; its full sequence is Nucleotide-binding protein Sbal_3671 (284 aa).

8–15 (GRSGSGKS) lines the ATP pocket. 56–59 (DVRN) serves as a coordination point for GTP.

The protein belongs to the RapZ-like family.

Its function is as follows. Displays ATPase and GTPase activities. The sequence is that of Nucleotide-binding protein Sbal_3671 from Shewanella baltica (strain OS155 / ATCC BAA-1091).